Here is a 310-residue protein sequence, read N- to C-terminus: MQIQDRFMSPQWKARFKGYVQVTKPGIIFGNLISVAGGFLLAAKGDVNLVLMLASLVGLSLVVASGCAINNCIDRDIDAKMQRTCKRVTVTGEIAVGNVLAFGLALGVLGFSILALFTNALALLFAVIGYIVYVGVYSLYMKRNSVYGTLVGSFSGAVPPVVGYCSVTGQMDMGAAILLLMFSLWQMPHSYAIAIFRFNDYAAANIPVLPVAEGMTKAKLHIVLYIAVFALVSALLPLAGYTGIAFMAVTCATSLWWLAMALKGYRHGVDMQRWARQVFGFSIITITALSVTMALDFQVVSQAPLLTLVK.

Helical transmembrane passes span Pro-25–Gly-45, Leu-49–Ile-69, Arg-87–Gly-107, Ala-120–Leu-139, Ser-145–Cys-165, Ala-176–Phe-196, Leu-220–Gly-240, Thr-242–Leu-262, and Gln-277–Phe-297.

The protein belongs to the UbiA prenyltransferase family. Protoheme IX farnesyltransferase subfamily.

It is found in the cell inner membrane. It carries out the reaction heme b + (2E,6E)-farnesyl diphosphate + H2O = Fe(II)-heme o + diphosphate. It functions in the pathway porphyrin-containing compound metabolism; heme O biosynthesis; heme O from protoheme: step 1/1. Its function is as follows. Converts heme B (protoheme IX) to heme O by substitution of the vinyl group on carbon 2 of heme B porphyrin ring with a hydroxyethyl farnesyl side group. This chain is Protoheme IX farnesyltransferase 2, found in Shewanella baltica (strain OS185).